Consider the following 493-residue polypeptide: 1-aminocyclopropane-1-carboxylate synthase 1 (493 aa).

Lys279 is modified (N6-(pyridoxal phosphate)lysine).

This sequence belongs to the class-I pyridoxal-phosphate-dependent aminotransferase family. In terms of assembly, homodimer. It depends on pyridoxal 5'-phosphate as a cofactor.

The enzyme catalyses S-adenosyl-L-methionine = 1-aminocyclopropane-1-carboxylate + S-methyl-5'-thioadenosine + H(+). Its pathway is alkene biosynthesis; ethylene biosynthesis via S-adenosyl-L-methionine; ethylene from S-adenosyl-L-methionine: step 1/2. Catalyzes the formation of 1-aminocyclopropane-1-carboxylate, a direct precursor of ethylene in higher plants. The chain is 1-aminocyclopropane-1-carboxylate synthase 1 (ACC1A) from Cucurbita pepo (Vegetable marrow).